The following is a 1072-amino-acid chain: Carbamoyl phosphate synthase large chain (1072 aa).

The segment at 1–401 is carboxyphosphate synthetic domain; the sequence is MPKRLDINTI…SLLKAVRSLE (401 aa). ATP is bound by residues R129, R169, G175, G176, K208, I210, E215, G241, V242, H243, Q284, and E298. The region spanning 133–327 is the ATP-grasp 1 domain; sequence RTLMQELNEP…IAKLAAKIAV (195 aa). Residues Q284, E298, and N300 each contribute to the Mg(2+) site. Mn(2+)-binding residues include Q284, E298, and N300. The tract at residues 402-546 is oligomerization domain; that stretch reads LGIYHLELNH…YSTYGDENES (145 aa). A carbamoyl phosphate synthetic domain region spans residues 547–929; it reads IVTERKSVMV…ALYKGLVAAG (383 aa). One can recognise an ATP-grasp 2 domain in the interval 671 to 861; the sequence is EAALTELGIP…MANIATKVIL (191 aa). Positions 707, 746, 752, 777, 778, 779, 780, 820, and 832 each coordinate ATP. Positions 820, 832, and 834 each coordinate Mg(2+). Residues Q820, E832, and N834 each contribute to the Mn(2+) site. Residues 930–1072 enclose the MGS-like domain; sequence ISIPTHGSVI…PTTRHEVVHA (143 aa). An allosteric domain region spans residues 930-1072; sequence ISIPTHGSVI…PTTRHEVVHA (143 aa).

It belongs to the CarB family. Composed of two chains; the small (or glutamine) chain promotes the hydrolysis of glutamine to ammonia, which is used by the large (or ammonia) chain to synthesize carbamoyl phosphate. Tetramer of heterodimers (alpha,beta)4. Mg(2+) is required as a cofactor. Mn(2+) serves as cofactor.

It catalyses the reaction hydrogencarbonate + L-glutamine + 2 ATP + H2O = carbamoyl phosphate + L-glutamate + 2 ADP + phosphate + 2 H(+). It carries out the reaction hydrogencarbonate + NH4(+) + 2 ATP = carbamoyl phosphate + 2 ADP + phosphate + 2 H(+). It functions in the pathway amino-acid biosynthesis; L-arginine biosynthesis; carbamoyl phosphate from bicarbonate: step 1/1. It participates in pyrimidine metabolism; UMP biosynthesis via de novo pathway; (S)-dihydroorotate from bicarbonate: step 1/3. Large subunit of the glutamine-dependent carbamoyl phosphate synthetase (CPSase). CPSase catalyzes the formation of carbamoyl phosphate from the ammonia moiety of glutamine, carbonate, and phosphate donated by ATP, constituting the first step of 2 biosynthetic pathways, one leading to arginine and/or urea and the other to pyrimidine nucleotides. The large subunit (synthetase) binds the substrates ammonia (free or transferred from glutamine from the small subunit), hydrogencarbonate and ATP and carries out an ATP-coupled ligase reaction, activating hydrogencarbonate by forming carboxy phosphate which reacts with ammonia to form carbamoyl phosphate. The chain is Carbamoyl phosphate synthase large chain from Bacillus cytotoxicus (strain DSM 22905 / CIP 110041 / 391-98 / NVH 391-98).